A 419-amino-acid polypeptide reads, in one-letter code: Pyrrolysine--tRNA ligase (419 aa).

Residues 100–157 (APKVKKAMPKSVSRAPKPLENSVSAKASTNTSRSVPSPAKSTPNSSVPASAPAPSLTR) are disordered. Polar residues predominate over residues 120-141 (NSVSAKASTNTSRSVPSPAKST). Positions 142-154 (PNSSVPASAPAPS) are enriched in low complexity.

The protein belongs to the class-II aminoacyl-tRNA synthetase family.

The protein resides in the cytoplasm. It catalyses the reaction tRNA(Pyl) + L-pyrrolysine + ATP = L-pyrrolysyl-tRNA(Pyl) + AMP + diphosphate. Catalyzes the attachment of pyrrolysine to tRNA(Pyl). Pyrrolysine is a lysine derivative encoded by the termination codon UAG. The polypeptide is Pyrrolysine--tRNA ligase (pylS) (Methanosarcina barkeri).